Reading from the N-terminus, the 890-residue chain is Alanine--tRNA ligase (890 aa).

Residues His-569, His-573, Cys-671, and His-675 each contribute to the Zn(2+) site.

The protein belongs to the class-II aminoacyl-tRNA synthetase family. The cofactor is Zn(2+).

Its subcellular location is the cytoplasm. It catalyses the reaction tRNA(Ala) + L-alanine + ATP = L-alanyl-tRNA(Ala) + AMP + diphosphate. In terms of biological role, catalyzes the attachment of alanine to tRNA(Ala) in a two-step reaction: alanine is first activated by ATP to form Ala-AMP and then transferred to the acceptor end of tRNA(Ala). Also edits incorrectly charged Ser-tRNA(Ala) and Gly-tRNA(Ala) via its editing domain. This Synechococcus sp. (strain CC9902) protein is Alanine--tRNA ligase.